Reading from the N-terminus, the 368-residue chain is Methylthioribose-1-phosphate isomerase (368 aa).

Residues Arg54 to Ala56, Arg91, and Gln204 each bind substrate. Asp245 serves as the catalytic Proton donor. Residue Asn255–Lys256 participates in substrate binding.

This sequence belongs to the eIF-2B alpha/beta/delta subunits family. MtnA subfamily.

The enzyme catalyses 5-(methylsulfanyl)-alpha-D-ribose 1-phosphate = 5-(methylsulfanyl)-D-ribulose 1-phosphate. Its pathway is amino-acid biosynthesis; L-methionine biosynthesis via salvage pathway; L-methionine from S-methyl-5-thio-alpha-D-ribose 1-phosphate: step 1/6. In terms of biological role, catalyzes the interconversion of methylthioribose-1-phosphate (MTR-1-P) into methylthioribulose-1-phosphate (MTRu-1-P). The protein is Methylthioribose-1-phosphate isomerase of Gluconobacter oxydans (strain 621H) (Gluconobacter suboxydans).